Here is a 421-residue protein sequence, read N- to C-terminus: Testin (421 aa).

Residues 92–199 (MILTNPVAAR…GDVKLPCELD (108 aa)) form the PET domain. The tract at residues 134–164 (KQPVAGSEGAQYRKKQLAKQLPAHDQDPSKC) is disordered. A compositionally biased stretch (basic and acidic residues) spans 155–164 (PAHDQDPSKC). 3 LIM zinc-binding domains span residues 234 to 297 (YSCY…CDSE), 299 to 359 (PRCA…NHAV), and 362 to 421 (QGCH…KMMS).

This sequence belongs to the prickle / espinas / testin family. As to quaternary structure, interacts via LIM domain 1 with ZYX. Interacts (via LIM domain 3) with ENAH and VASP. Interacts with ALKBH4, talin, actin, alpha-actinin, GRIP1 and PXN. Interacts (via LIM domain 2) with ACTL7A (via N-terminus). Heterodimer with ACTL7A; the heterodimer interacts with ENAH to form a heterotrimer.

Its subcellular location is the cytoplasm. It is found in the cell junction. It localises to the focal adhesion. Functionally, scaffold protein that may play a role in cell adhesion, cell spreading and in the reorganization of the actin cytoskeleton. Plays a role in the regulation of cell proliferation. May act as a tumor suppressor. In Eulemur macaco macaco (Black lemur), this protein is Testin (TES).